Reading from the N-terminus, the 1146-residue chain is Integrin alpha-PS1 (1146 aa).

A signal peptide spans 1 to 30 (MLELPFTTIRPNCRLRQNLGILIILQCVLT). The Extracellular portion of the chain corresponds to 31 to 1085 (CYNFNLEQRL…NQQRDTSIPW (1055 aa)). FG-GAP repeat units lie at residues 38–105 (QRLP…FDDC), 121–186 (LSPP…FEEV), 193–245 (RPVQ…YLQR), 254–303 (HSDL…KSTD), 304–366 (NPIP…TLPM), 367–422 (KYTL…GLNS), and 432–494 (ELGG…RKEL). N-linked (GlcNAc...) asparagine glycans are attached at residues Asn-68, Asn-86, and Asn-147. N-linked (GlcNAc...) asparagine glycans are attached at residues Asn-470, Asn-511, Asn-657, Asn-680, Asn-711, Asn-718, Asn-761, and Asn-928. A disordered region spans residues 938 to 958 (YYSSSHRDDHSDDTQSNRNRV). A compositionally biased stretch (basic and acidic residues) spans 942–952 (SHRDDHSDDTQ). Asn-1027 carries an N-linked (GlcNAc...) asparagine glycan. The helical transmembrane segment at 1086–1106 (LIIILGIVGGLLLLALVTYVL) threads the bilayer. The Cytoplasmic segment spans residues 1107–1146 (WKVGFFKRIRPTDPTLSGNLEKMNEEKPFLAPSKNTHHVF).

This sequence belongs to the integrin alpha chain family. In terms of assembly, heterodimer of an alpha and a beta subunit. The alpha subunit is composed of a heavy and a light chain linked by a disulfide bond. Alpha-PS1 associates with beta-PS. Expressed in follicle cells (at protein level). At syncytial blastoderm stage, expressed in the ectoderm but not in the mesodermal precursors. At embryonic stage 7, expressed in dorsal and ventrolateral ectoderm and in some yolk nuclei. At late stage 10, expression is homogeneous in the ectoderm and is particularly abundant in the anterior and posterior midgut primordia. At stage 11, strongly expressed in a metameric pattern in the ectoderm, in the proctodeum and in the posterior midgut primordium. At stage 12, accumulates at the segment boundaries that start to become morphologically visible, similar expression pattern is observed in the central nervous system. In third larval instar wing imaginal disk, strongly expressed in the dorsal compartment, in the adepithelial cells and in patches on the peripodial membrane covering the imaginal disk to the outside.

Its subcellular location is the apical cell membrane. It is found in the lateral cell membrane. The protein resides in the basal cell membrane. Integrin alpha-PS1/beta-PS is a receptor for laminin. The polypeptide is Integrin alpha-PS1 (mew) (Drosophila melanogaster (Fruit fly)).